A 195-amino-acid chain; its full sequence is Large ribosomal subunit protein uL18 (195 aa).

The protein belongs to the universal ribosomal protein uL18 family. Part of the 50S ribosomal subunit. Contacts the 5S and 23S rRNAs.

Its function is as follows. This is one of the proteins that bind and probably mediate the attachment of the 5S RNA into the large ribosomal subunit, where it forms part of the central protuberance. This is Large ribosomal subunit protein uL18 from Methanocaldococcus jannaschii (strain ATCC 43067 / DSM 2661 / JAL-1 / JCM 10045 / NBRC 100440) (Methanococcus jannaschii).